Consider the following 243-residue polypeptide: Urease accessory protein UreF (243 aa).

The protein belongs to the UreF family. In terms of assembly, ureD, UreF and UreG form a complex that acts as a GTP-hydrolysis-dependent molecular chaperone, activating the urease apoprotein by helping to assemble the nickel containing metallocenter of UreC. The UreE protein probably delivers the nickel.

The protein localises to the cytoplasm. In terms of biological role, required for maturation of urease via the functional incorporation of the urease nickel metallocenter. This chain is Urease accessory protein UreF, found in Xanthobacter autotrophicus (strain ATCC BAA-1158 / Py2).